The primary structure comprises 349 residues: N-acetyltaurine hydrolase (349 aa).

A divalent metal cation is bound by residues H26, H28, E169, H201, H230, and D298.

Belongs to the metallo-dependent hydrolases superfamily. Phosphotriesterase family. A divalent metal cation is required as a cofactor.

The protein resides in the cytoplasm. Its subcellular location is the cytosol. The enzyme catalyses N-acetyltaurine + H2O = taurine + acetate. It catalyses the reaction N-propanoyltaurine + H2O = propanoate + taurine. The catalysed reaction is N-acetyl-L-methionine + H2O = L-methionine + acetate. It carries out the reaction N-acetyl-L-isoleucine + H2O = L-isoleucine + acetate. The enzyme catalyses N-acetyl-L-leucine + H2O = L-leucine + acetate. It catalyses the reaction N-acetyl-L-valine + H2O = L-valine + acetate. Its function is as follows. N-acetyltaurine hydrolase that regulates feeding by catalyzing the hydrolysis of N-acetyltaurine into taurine and acetate. N-acetyltaurine has anorexigenic and anti-obesity effects that are dependent on GFRAL receptor and GDF15. PTER also acts on other N-acetyl amino acids (Met, Ile, Leu, Val) and N-propionyltaurine, but at lower rates. This Bos taurus (Bovine) protein is N-acetyltaurine hydrolase (PTER).